A 353-amino-acid polypeptide reads, in one-letter code: Photosystem II protein D1 (353 aa).

Thr2 is modified (N-acetylthreonine). Thr2 is subject to Phosphothreonine. Helical transmembrane passes span 29 to 46, 118 to 133, and 142 to 156; these read YIGW…TATS, HFLL…EWEL, and WIAV…AATA. Residue His118 coordinates chlorophyll a. Tyr126 serves as a coordination point for pheophytin a. Asp170 and Glu189 together coordinate [CaMn4O5] cluster. A helical membrane pass occupies residues 197–218; sequence FHMLGVAGVFGGSLFSAMHGSL. Position 198 (His198) interacts with chlorophyll a. Residues His215 and 264–265 each bind a quinone; that span reads SF. His215 provides a ligand contact to Fe cation. His272 contributes to the Fe cation binding site. A helical membrane pass occupies residues 274-288; sequence FLAAWPVVGIWFTAL. [CaMn4O5] cluster contacts are provided by His332, Glu333, Asp342, and Ala344. A propeptide spanning residues 345 to 353 is cleaved from the precursor; it reads SVEAPSVNA.

It belongs to the reaction center PufL/M/PsbA/D family. PSII is composed of 1 copy each of membrane proteins PsbA, PsbB, PsbC, PsbD, PsbE, PsbF, PsbH, PsbI, PsbJ, PsbK, PsbL, PsbM, PsbT, PsbX, PsbY, PsbZ, Psb30/Ycf12, at least 3 peripheral proteins of the oxygen-evolving complex and a large number of cofactors. It forms dimeric complexes. The D1/D2 heterodimer binds P680, chlorophylls that are the primary electron donor of PSII, and subsequent electron acceptors. It shares a non-heme iron and each subunit binds pheophytin, quinone, additional chlorophylls, carotenoids and lipids. D1 provides most of the ligands for the Mn4-Ca-O5 cluster of the oxygen-evolving complex (OEC). There is also a Cl(-1) ion associated with D1 and D2, which is required for oxygen evolution. The PSII complex binds additional chlorophylls, carotenoids and specific lipids. serves as cofactor. Tyr-161 forms a radical intermediate that is referred to as redox-active TyrZ, YZ or Y-Z. Post-translationally, C-terminally processed by CTPA; processing is essential to allow assembly of the oxygen-evolving complex and thus photosynthetic growth.

It is found in the plastid. It localises to the chloroplast thylakoid membrane. The enzyme catalyses 2 a plastoquinone + 4 hnu + 2 H2O = 2 a plastoquinol + O2. Functionally, photosystem II (PSII) is a light-driven water:plastoquinone oxidoreductase that uses light energy to abstract electrons from H(2)O, generating O(2) and a proton gradient subsequently used for ATP formation. It consists of a core antenna complex that captures photons, and an electron transfer chain that converts photonic excitation into a charge separation. The D1/D2 (PsbA/PsbD) reaction center heterodimer binds P680, the primary electron donor of PSII as well as several subsequent electron acceptors. This Oltmannsiellopsis viridis (Marine flagellate) protein is Photosystem II protein D1.